The primary structure comprises 202 residues: ATP synthase subunit b 1 (202 aa).

A helical transmembrane segment spans residues 17–37; the sequence is IAAVLCFSVLVPLVAMAAEGG.

This sequence belongs to the ATPase B chain family. As to quaternary structure, F-type ATPases have 2 components, F(1) - the catalytic core - and F(0) - the membrane proton channel. F(1) has five subunits: alpha(3), beta(3), gamma(1), delta(1), epsilon(1). F(0) has three main subunits: a(1), b(2) and c(10-14). The alpha and beta chains form an alternating ring which encloses part of the gamma chain. F(1) is attached to F(0) by a central stalk formed by the gamma and epsilon chains, while a peripheral stalk is formed by the delta and b chains.

It localises to the cell inner membrane. F(1)F(0) ATP synthase produces ATP from ADP in the presence of a proton or sodium gradient. F-type ATPases consist of two structural domains, F(1) containing the extramembraneous catalytic core and F(0) containing the membrane proton channel, linked together by a central stalk and a peripheral stalk. During catalysis, ATP synthesis in the catalytic domain of F(1) is coupled via a rotary mechanism of the central stalk subunits to proton translocation. In terms of biological role, component of the F(0) channel, it forms part of the peripheral stalk, linking F(1) to F(0). The sequence is that of ATP synthase subunit b 1 from Syntrophus aciditrophicus (strain SB).